Reading from the N-terminus, the 473-residue chain is 3-oxoacyl-[acyl-carrier-protein] synthase I, chloroplastic (473 aa).

Positions 1-10 (MQALQSSSLR) are enriched in polar residues. The segment at 1–26 (MQALQSSSLRASPPNPLRLPSNRQSH) is disordered. Residues 1 to 46 (MQALQSSSLRASPPNPLRLPSNRQSHQLITNARPLRRQQRSFISAS) constitute a chloroplast transit peptide. Residues 60 to 470 (KKRVVITGMG…GHNSVVAFSA (411 aa)) form the Ketosynthase family 3 (KS3) domain. Residues Cys224, His364, and His400 each act as for beta-ketoacyl synthase activity in the active site.

This sequence belongs to the thiolase-like superfamily. Beta-ketoacyl-ACP synthases family. As to quaternary structure, homodimer.

The protein localises to the plastid. It is found in the chloroplast stroma. The enzyme catalyses a fatty acyl-[ACP] + malonyl-[ACP] + H(+) = a 3-oxoacyl-[ACP] + holo-[ACP] + CO2. Catalyzes the condensation reaction of fatty acid synthesis by the addition to an acyl acceptor of two carbons from malonyl-ACP. Specific for elongation from C-10 to unsaturated C-16 and C-18 fatty acids. The sequence is that of 3-oxoacyl-[acyl-carrier-protein] synthase I, chloroplastic (KAS1) from Arabidopsis thaliana (Mouse-ear cress).